The sequence spans 175 residues: Large ribosomal subunit protein uL10 (175 aa).

This sequence belongs to the universal ribosomal protein uL10 family. Part of the ribosomal stalk of the 50S ribosomal subunit. The N-terminus interacts with L11 and the large rRNA to form the base of the stalk. The C-terminus forms an elongated spine to which L12 dimers bind in a sequential fashion forming a multimeric L10(L12)X complex.

Functionally, forms part of the ribosomal stalk, playing a central role in the interaction of the ribosome with GTP-bound translation factors. The sequence is that of Large ribosomal subunit protein uL10 from Synechococcus sp. (strain CC9311).